A 220-amino-acid chain; its full sequence is Putative cobalt transport protein CbiM (220 aa).

6 helical membrane passes run G6–Y26, I45–G65, G74–L94, T107–F127, L153–V173, and I188–S208.

This sequence belongs to the CbiM family. In terms of assembly, forms an energy-coupling factor (ECF) transporter complex composed of an ATP-binding protein (A component, CbiO), a transmembrane protein (T component, CbiQ) and 2 possible substrate-capture proteins (S components, CbiM and CbiN) of unknown stoichimetry.

The protein localises to the cell membrane. Its pathway is cofactor biosynthesis; adenosylcobalamin biosynthesis. Part of the energy-coupling factor (ECF) transporter complex CbiMNOQ involved in cobalt import. The polypeptide is Putative cobalt transport protein CbiM (Halobacterium salinarum (strain ATCC 29341 / DSM 671 / R1)).